A 383-amino-acid polypeptide reads, in one-letter code: S-(hydroxymethyl)glutathione dehydrogenase (383 aa).

Cys-51 serves as a coordination point for Zn(2+). His-52 lines the NAD(+) pocket. 7 residues coordinate Zn(2+): His-73, Glu-74, Cys-103, Cys-106, Cys-109, Cys-117, and Cys-180. NAD(+) contacts are provided by residues 205–210, Asp-229, and 298–300; these read GAGCVG and IGV.

This sequence belongs to the zinc-containing alcohol dehydrogenase family. Class-III subfamily. Zn(2+) serves as cofactor.

The catalysed reaction is a primary alcohol + NAD(+) = an aldehyde + NADH + H(+). It catalyses the reaction a secondary alcohol + NAD(+) = a ketone + NADH + H(+). The enzyme catalyses S-(hydroxymethyl)glutathione + NADP(+) = S-formylglutathione + NADPH + H(+). It carries out the reaction S-(hydroxymethyl)glutathione + NAD(+) = S-formylglutathione + NADH + H(+). The catalysed reaction is S-nitrosoglutathione + NADH + H(+) = S-(hydroxysulfenamide)glutathione + NAD(+). Functionally, oxidizes long-chain alcohols and, in the presence of glutathione, is able to oxidize formaldehyde. Also acts as a S-nitroso-glutathione reductase by catalyzing the NADH-dependent reduction of S-nitrosoglutathione, thereby regulating protein S-nitrosylation. The protein is S-(hydroxymethyl)glutathione dehydrogenase (FDH1) of Aspergillus oryzae (strain ATCC 42149 / RIB 40) (Yellow koji mold).